The sequence spans 176 residues: Crossover junction endodeoxyribonuclease RuvC (176 aa).

Residues Asp-8, Glu-69, and Asp-141 contribute to the active site. Positions 8, 69, and 141 each coordinate Mg(2+).

The protein belongs to the RuvC family. As to quaternary structure, homodimer which binds Holliday junction (HJ) DNA. The HJ becomes 2-fold symmetrical on binding to RuvC with unstacked arms; it has a different conformation from HJ DNA in complex with RuvA. In the full resolvosome a probable DNA-RuvA(4)-RuvB(12)-RuvC(2) complex forms which resolves the HJ. It depends on Mg(2+) as a cofactor.

The protein resides in the cytoplasm. The enzyme catalyses Endonucleolytic cleavage at a junction such as a reciprocal single-stranded crossover between two homologous DNA duplexes (Holliday junction).. Functionally, the RuvA-RuvB-RuvC complex processes Holliday junction (HJ) DNA during genetic recombination and DNA repair. Endonuclease that resolves HJ intermediates. Cleaves cruciform DNA by making single-stranded nicks across the HJ at symmetrical positions within the homologous arms, yielding a 5'-phosphate and a 3'-hydroxyl group; requires a central core of homology in the junction. The consensus cleavage sequence is 5'-(A/T)TT(C/G)-3'. Cleavage occurs on the 3'-side of the TT dinucleotide at the point of strand exchange. HJ branch migration catalyzed by RuvA-RuvB allows RuvC to scan DNA until it finds its consensus sequence, where it cleaves and resolves the cruciform DNA. The chain is Crossover junction endodeoxyribonuclease RuvC from Pseudomonas syringae pv. tomato (strain ATCC BAA-871 / DC3000).